Here is a 486-residue protein sequence, read N- to C-terminus: E3 ubiquitin-protein ligase TRIM50 (486 aa).

The RING-type zinc-finger motif lies at 16-57 (CPVCLEVFKEPLMLQCGHSYCKGCLLSLSRHLDSELRCPVCR). Residues 84–125 (PEPQVCTHHRNPLSLFCEKDQELICGLCGLLGSHQHHRVTPV) form a B box-type zinc finger. Zn(2+) contacts are provided by C89, H92, C111, and H117. 2 coiled-coil regions span residues 125 to 170 (VSTV…ESDV) and 204 to 235 (LVAS…FGNE). The region spanning 275–474 (DIKLTVWKRL…LPMVLPLPSG (200 aa)) is the B30.2/SPRY domain. At K372 the chain carries N6-acetyllysine.

This sequence belongs to the TRIM/RBCC family. As to quaternary structure, can form dimers and trimers. Interacts with several E2 ubiquitin-conjugating enzymes, including UBE2L6, UBE2E1, UBE2E3. No interaction with UBE2H. Interacts with BECN1. Interacts with SQSTM1. Interacts with NLRP3. Auto-ubiquitinated. Post-translationally, acetylated by EP300 and KAT2B. HDAC6 drives TRIM50 deacetylation. Acetylation antagonizes with TRIM50 ubiquitination.

It localises to the cytoplasm. It carries out the reaction S-ubiquitinyl-[E2 ubiquitin-conjugating enzyme]-L-cysteine + [acceptor protein]-L-lysine = [E2 ubiquitin-conjugating enzyme]-L-cysteine + N(6)-ubiquitinyl-[acceptor protein]-L-lysine.. Its function is as follows. E3 ubiquitin-protein ligase that ubiquitinates Beclin-1/BECN1 in a 'Lys-63'-dependent manner enhancing its binding to ULK1. In turn, promotes starvation-induced autophagy activation. Also interacts with p62/SQSTM1 protein and thereby induces the formation and the autophagy clearance of aggresome-associated polyubiquitinated proteins through HDAC6 interaction. Also promotes NLRP3 inflammasome activation by directly inducing NLRP3 oligomerization independent of its E3 ligase function. The polypeptide is E3 ubiquitin-protein ligase TRIM50 (TRIM50) (Sus scrofa (Pig)).